The primary structure comprises 126 residues: uncharacterized protein (126 aa).

The N-terminal stretch at 1–23 is a signal peptide; it reads MLKKLIMGFFLLILLGIAGVAVM.

This is an uncharacterized protein from Archaeoglobus fulgidus (strain ATCC 49558 / DSM 4304 / JCM 9628 / NBRC 100126 / VC-16).